Reading from the N-terminus, the 641-residue chain is UPF0329 protein ECU11_0030 (641 aa).

The segment covering 358–387 (RQRKREEETERSVKELVGDEEKAKSKEEKA) has biased composition (basic and acidic residues). Positions 358 to 444 (RQRKREEETE…KGGKKKSKGG (87 aa)) are disordered. The span at 435-444 (KGGKKKSKGG) shows a compositional bias: basic residues.

It belongs to the UPF0329 family.

The protein is UPF0329 protein ECU11_0030 of Encephalitozoon cuniculi (strain GB-M1) (Microsporidian parasite).